The primary structure comprises 990 residues: TonB-dependent receptor P26 (990 aa).

Residues 86–93 (DEVVVIGY) carry the TonB box motif. The 117-residue stretch at 97-213 (RKSDLTGSVS…ANGVVLVTTK (117 aa)) folds into the TBDR plug domain. The TBDR beta-barrel domain occupies 220-990 (SSKPEVSANI…TITLGLNVTF (771 aa)). Positions 878–902 (TPENPTSDIPRAGGDSVTGTPPNSA) are disordered. Positions 974 to 990 (GSYPNPRTITLGLNVTF) match the TonB C-terminal box motif.

This sequence belongs to the TonB-dependent receptor family.

Its subcellular location is the cell outer membrane. TonB-dependent receptor probably involved in ulvan degradation. Ulvan is the main polysaccharide component of the Ulvales (green seaweed) cell wall. It is composed of disaccharide building blocks comprising 3-sulfated rhamnose (Rha3S) linked to D-glucuronic acid (GlcA), L-iduronic acid (IduA), or D-xylose (Xyl). The TonB-dependent receptor may mediate transport of ulvan oligosaccharides from the surface of the outer membrane to the periplasm for subsequent degradation. In Formosa agariphila (strain DSM 15362 / KCTC 12365 / LMG 23005 / KMM 3901 / M-2Alg 35-1), this protein is TonB-dependent receptor P26.